Reading from the N-terminus, the 185-residue chain is Cytidylate kinase (185 aa).

8 to 16 lines the ATP pocket; it reads GPPGSGKTT.

It belongs to the cytidylate kinase family. Type 2 subfamily.

It is found in the cytoplasm. The enzyme catalyses CMP + ATP = CDP + ADP. It catalyses the reaction dCMP + ATP = dCDP + ADP. The sequence is that of Cytidylate kinase from Desulfurococcus amylolyticus (strain DSM 18924 / JCM 16383 / VKM B-2413 / 1221n) (Desulfurococcus kamchatkensis).